Here is a 196-residue protein sequence, read N- to C-terminus: Small ribosomal subunit protein uS4c (196 aa).

Residues A17 to S38 are disordered. Over residues K24–S38 the composition is skewed to basic residues. The S4 RNA-binding domain maps to M89–L169.

Belongs to the universal ribosomal protein uS4 family. As to quaternary structure, part of the 30S ribosomal subunit. Contacts protein S5. The interaction surface between S4 and S5 is involved in control of translational fidelity.

The protein localises to the plastid. It localises to the chloroplast. Functionally, one of the primary rRNA binding proteins, it binds directly to 16S rRNA where it nucleates assembly of the body of the 30S subunit. In terms of biological role, with S5 and S12 plays an important role in translational accuracy. This Lygeum spartum protein is Small ribosomal subunit protein uS4c (rps4).